The primary structure comprises 116 residues: NADH-ubiquinone oxidoreductase chain 3 (116 aa).

Helical transmembrane passes span 3 to 23 (LITT…TVSF), 56 to 76 (FFLI…LLPL), and 87 to 107 (LTLV…IYEW).

The protein belongs to the complex I subunit 3 family.

It is found in the mitochondrion membrane. The catalysed reaction is a ubiquinone + NADH + 5 H(+)(in) = a ubiquinol + NAD(+) + 4 H(+)(out). In terms of biological role, core subunit of the mitochondrial membrane respiratory chain NADH dehydrogenase (Complex I) that is believed to belong to the minimal assembly required for catalysis. Complex I functions in the transfer of electrons from NADH to the respiratory chain. The immediate electron acceptor for the enzyme is believed to be ubiquinone. This is NADH-ubiquinone oxidoreductase chain 3 (MT-ND3) from Oncorhynchus kisutch (Coho salmon).